Here is a 384-residue protein sequence, read N- to C-terminus: 8-amino-7-oxononanoate synthase (384 aa).

Residue Arg-21 coordinates substrate. 108-109 (GF) is a pyridoxal 5'-phosphate binding site. His-133 contacts substrate. 3 residues coordinate pyridoxal 5'-phosphate: Ser-179, His-207, and Thr-233. Position 236 is an N6-(pyridoxal phosphate)lysine (Lys-236). Thr-352 contacts substrate.

It belongs to the class-II pyridoxal-phosphate-dependent aminotransferase family. BioF subfamily. In terms of assembly, homodimer. It depends on pyridoxal 5'-phosphate as a cofactor.

It catalyses the reaction 6-carboxyhexanoyl-[ACP] + L-alanine + H(+) = (8S)-8-amino-7-oxononanoate + holo-[ACP] + CO2. Its pathway is cofactor biosynthesis; biotin biosynthesis. Its function is as follows. Catalyzes the decarboxylative condensation of pimeloyl-[acyl-carrier protein] and L-alanine to produce 8-amino-7-oxononanoate (AON), [acyl-carrier protein], and carbon dioxide. This is 8-amino-7-oxononanoate synthase from Shigella flexneri serotype 5b (strain 8401).